We begin with the raw amino-acid sequence, 207 residues long: Holliday junction resolvase RecU (207 aa).

Residues 1–30 are disordered; it reads MPIRYPNGQPYSRSPKQGQAKKPLPADTYS. Mg(2+)-binding residues include T87, D89, E102, and Q121.

Belongs to the RecU family. Mg(2+) is required as a cofactor.

Its subcellular location is the cytoplasm. The enzyme catalyses Endonucleolytic cleavage at a junction such as a reciprocal single-stranded crossover between two homologous DNA duplexes (Holliday junction).. Its function is as follows. Endonuclease that resolves Holliday junction intermediates in genetic recombination. Cleaves mobile four-strand junctions by introducing symmetrical nicks in paired strands. Promotes annealing of linear ssDNA with homologous dsDNA. Required for DNA repair, homologous recombination and chromosome segregation. The polypeptide is Holliday junction resolvase RecU (Shouchella clausii (strain KSM-K16) (Alkalihalobacillus clausii)).